A 360-amino-acid polypeptide reads, in one-letter code: Leukotriene B4 receptor 2 (360 aa).

Residues 1–24 lie on the Extracellular side of the membrane; the sequence is MSVCYRPPGNETLLSWKGSRATGT. Asn-10 is a glycosylation site (N-linked (GlcNAc...) asparagine). A helical membrane pass occupies residues 25-45; it reads AFLLLAALLGLPGNGFVVWSL. The Cytoplasmic portion of the chain corresponds to 46-60; that stretch reads AGWRPTAGRPLAATL. The helical transmembrane segment at 61-81 threads the bilayer; that stretch reads VLHLALADGAVLLLTPLFVAF. Residues 82-96 lie on the Extracellular side of the membrane; sequence LSQEAWPLGQVGCKA. The chain crosses the membrane as a helical span at residues 97–117; it reads VYYVCALSMYASVLLTGLLSL. Residues 118–140 lie on the Cytoplasmic side of the membrane; it reads QRCLAVTRPFLAPRLRSPALARR. A helical membrane pass occupies residues 141 to 161; it reads LLLGVWLAALVLAVPAAVYRH. The Extracellular portion of the chain corresponds to 162–185; sequence LWGGRVCQLCHPSPVHAAAHLSLE. A helical transmembrane segment spans residues 186–206; sequence TLTAFVLPFGTVLGCYGVTLA. The Cytoplasmic portion of the chain corresponds to 207-224; sequence RLRGARWGSGRQGTRVGR. Residues 225-245 traverse the membrane as a helical segment; sequence LVSAIVLAFGLLWAPYHAVNL. Over 246-275 the chain is Extracellular; that stretch reads LQAVAALAPPEGPLARLGGAGQAARAGTTA. A helical membrane pass occupies residues 276–296; the sequence is LAFFSSSVNPVLYVFTAGDLL. The Cytoplasmic portion of the chain corresponds to 297–360; that stretch reads PRAGPRFLTR…GKTEKDSQEW (64 aa). The disordered stretch occupies residues 311–360; the sequence is SGEARGGSRSREGTMELRTTPKLKVMGQGRGNGDPGGGDGGKTEKDSQEW. Residues 338–350 show a composition bias toward gly residues; sequence QGRGNGDPGGGDG. A compositionally biased stretch (basic and acidic residues) spans 351–360; that stretch reads GKTEKDSQEW.

Belongs to the G-protein coupled receptor 1 family.

Its subcellular location is the cell membrane. Low-affinity receptor for leukotrienes including leukotriene B4. Mediates chemotaxis of granulocytes and macrophages. The response is mediated via G-proteins that activate a phosphatidylinositol-calcium second messenger system. This is Leukotriene B4 receptor 2 (Ltb4r2) from Mus musculus (Mouse).